A 119-amino-acid chain; its full sequence is uncharacterized protein (119 aa).

It to T.pallidum TP_0127, TP_0315 and TP_0619.

This is an uncharacterized protein from Treponema pallidum (strain Nichols).